We begin with the raw amino-acid sequence, 380 residues long: Cytochrome b (380 aa).

4 helical membrane passes run 34–54 (FGSLLAVCLATQIITGLLLAM), 78–99 (WLIRNLHANGASFFFICIFLHI), 114–134 (WNTGVVLLLTLMATAFVGYVL), and 179–199 (FFALHFLLPFVIAGITIIHLT). Heme b contacts are provided by His84 and His98. Heme b contacts are provided by His183 and His197. His202 is a binding site for a ubiquinone. 4 helical membrane passes run 227 to 247 (LKDILGLTLMFIPFLTLALFS), 289 to 309 (LGGVLALAASVLILLLIPFLH), 321 to 341 (LSQILFWLLVANLLILTWIGS), and 348 to 368 (FIIIGQMASFSYFSILLILFP).

This sequence belongs to the cytochrome b family. As to quaternary structure, the cytochrome bc1 complex contains 11 subunits: 3 respiratory subunits (MT-CYB, CYC1 and UQCRFS1), 2 core proteins (UQCRC1 and UQCRC2) and 6 low-molecular weight proteins (UQCRH/QCR6, UQCRB/QCR7, UQCRQ/QCR8, UQCR10/QCR9, UQCR11/QCR10 and a cleavage product of UQCRFS1). This cytochrome bc1 complex then forms a dimer. Requires heme b as cofactor.

Its subcellular location is the mitochondrion inner membrane. Component of the ubiquinol-cytochrome c reductase complex (complex III or cytochrome b-c1 complex) that is part of the mitochondrial respiratory chain. The b-c1 complex mediates electron transfer from ubiquinol to cytochrome c. Contributes to the generation of a proton gradient across the mitochondrial membrane that is then used for ATP synthesis. This is Cytochrome b (MT-CYB) from Pavo muticus (Green peafowl).